Consider the following 247-residue polypeptide: tRNA pseudouridine synthase A 1 (247 aa).

Catalysis depends on aspartate 53, which acts as the Nucleophile. Tyrosine 111 contacts substrate.

The protein belongs to the tRNA pseudouridine synthase TruA family. As to quaternary structure, homodimer.

It carries out the reaction uridine(38/39/40) in tRNA = pseudouridine(38/39/40) in tRNA. Formation of pseudouridine at positions 38, 39 and 40 in the anticodon stem and loop of transfer RNAs. This chain is tRNA pseudouridine synthase A 1, found in Bacillus cereus (strain ATCC 10987 / NRS 248).